Consider the following 396-residue polypeptide: L-cysteine desulfidase (396 aa).

The active-site Proton acceptor is the Cys-23. [4Fe-4S] cluster contacts are provided by Cys-287, Cys-329, and Cys-336.

Belongs to the L-cysteine desulfidase family. Homotrimer. [4Fe-4S] cluster is required as a cofactor.

The enzyme catalyses L-cysteine + H2O = hydrogen sulfide + pyruvate + NH4(+) + H(+). Functionally, catalyzes the cleavage of L-cysteine to form 2-aminoprop-2-enoate and sulfide. The former then spontaneously hydrolyzes to pyruvate and NH(3). May be responsible for the production of sulfide required for the biosynthesis of iron-sulfur centers in this archaea. This chain is L-cysteine desulfidase, found in Methanococcus maripaludis (strain DSM 14266 / JCM 13030 / NBRC 101832 / S2 / LL).